The following is a 242-amino-acid chain: NAD(P)H-hydrate epimerase (242 aa).

A YjeF N-terminal domain is found at 11–221 (AKALDAELMS…KVITKKFNLS (211 aa)). 61 to 65 (NNGGD) is a binding site for (6S)-NADPHX. Residues N62 and D128 each contribute to the K(+) site. (6S)-NADPHX contacts are provided by residues 132–138 (GFSFKGP) and D161. A K(+)-binding site is contributed by S164.

The protein belongs to the NnrE/AIBP family. The cofactor is K(+).

It localises to the cytoplasm. The protein resides in the mitochondrion. Its subcellular location is the nucleus. It catalyses the reaction (6R)-NADHX = (6S)-NADHX. It carries out the reaction (6R)-NADPHX = (6S)-NADPHX. In terms of biological role, catalyzes the epimerization of the S- and R-forms of NAD(P)HX, a damaged form of NAD(P)H that is a result of enzymatic or heat-dependent hydration. This is a prerequisite for the S-specific NAD(P)H-hydrate dehydratase to allow the repair of both epimers of NAD(P)HX. May have a role in meiosis. The sequence is that of NAD(P)H-hydrate epimerase (mug182) from Schizosaccharomyces pombe (strain 972 / ATCC 24843) (Fission yeast).